Consider the following 203-residue polypeptide: Small ribosomal subunit protein uS4c (203 aa).

The segment at Leu-18–Lys-42 is disordered. A compositionally biased stretch (polar residues) spans Met-33 to Lys-42. In terms of domain architecture, S4 RNA-binding spans Met-91–Lys-152.

This sequence belongs to the universal ribosomal protein uS4 family. As to quaternary structure, part of the 30S ribosomal subunit. Contacts protein S5. The interaction surface between S4 and S5 is involved in control of translational fidelity.

It is found in the plastid. Its subcellular location is the chloroplast. Its function is as follows. One of the primary rRNA binding proteins, it binds directly to 16S rRNA where it nucleates assembly of the body of the 30S subunit. With S5 and S12 plays an important role in translational accuracy. The polypeptide is Small ribosomal subunit protein uS4c (rps4) (Pinus koraiensis (Korean pine)).